We begin with the raw amino-acid sequence, 764 residues long: E3 ubiquitin-protein ligase CBL-B-B (764 aa).

A compositionally biased stretch (low complexity) spans 1–19 (MASSSSSSSNSSTSSSALS). The tract at residues 1 to 27 (MASSSSSSSNSSTSSSALSGRLPGARS) is disordered. The tract at residues 48-180 (PPKQAAADRR…KAIFPSGQFQ (133 aa)) is 4H. Residues 48-356 (PPKQAAADRR…GRSYNPDLTD (309 aa)) form the Cbl-PTB domain. Residues 181–253 (GDTFRITKAD…FEFDIFARLF (73 aa)) form an EF-hand-like region. Residues Asp234, Thr236, Asn238, Tyr240, and Glu245 each contribute to the Ca(2+) site. The interval 254 to 356 (QPWSSILRNW…GRSYNPDLTD (103 aa)) is SH2-like. 4-O-phospho-L-tyrosine is bound at residue Arg299. Positions 357-385 (LCEPTPHDHIKVTQEQYELYCEMGSTFQL) are linker. The RING-type zinc finger occupies 386 to 425 (CKICAENDKDVKIEPCGHLMCTSCLTSWQESDGQGCPFCR). Disordered regions lie at residues 482-583 (MNER…SRTC) and 707-726 (KVRN…SSHP). The segment covering 485-498 (RQNSPVTSPGSSPL) has biased composition (polar residues). The segment covering 556 to 578 (LPAPPPPLREPPPPPERPPPIPP) has biased composition (pro residues).

Interacts with several SH3 domain-containing proteins and with poly-ubiquitinated proteins.

Its subcellular location is the cytoplasm. The enzyme catalyses S-ubiquitinyl-[E2 ubiquitin-conjugating enzyme]-L-cysteine + [acceptor protein]-L-lysine = [E2 ubiquitin-conjugating enzyme]-L-cysteine + N(6)-ubiquitinyl-[acceptor protein]-L-lysine.. The protein operates within protein modification; protein ubiquitination. E3 ubiquitin-protein ligase which accepts ubiquitin from specific E2 ubiquitin-conjugating enzymes, and transfers it to substrates, generally promoting their degradation by the proteasome. In Xenopus laevis (African clawed frog), this protein is E3 ubiquitin-protein ligase CBL-B-B (cblb-b).